The chain runs to 26 residues: Dermaseptin-J4 (26 aa).

Val26 carries the valine amide modification.

In terms of tissue distribution, expressed by the skin glands.

It localises to the secreted. In terms of biological role, has antimicrobial activity. This chain is Dermaseptin-J4, found in Phasmahyla jandaia (Jandaia leaf frog).